The chain runs to 147 residues: Large-conductance mechanosensitive channel (147 aa).

Helical transmembrane passes span 14-34 and 85-105; these read VVDM…VKSL and FGLF…LFMI.

It belongs to the MscL family. In terms of assembly, homopentamer.

The protein localises to the cell inner membrane. Its function is as follows. Channel that opens in response to stretch forces in the membrane lipid bilayer. May participate in the regulation of osmotic pressure changes within the cell. This chain is Large-conductance mechanosensitive channel, found in Tolumonas auensis (strain DSM 9187 / NBRC 110442 / TA 4).